Here is a 190-residue protein sequence, read N- to C-terminus: UPF0200 protein TGAM_0868 (190 aa).

7-14 (GMPGSGKS) contributes to the ATP binding site.

The protein belongs to the UPF0200 family.

The sequence is that of UPF0200 protein TGAM_0868 from Thermococcus gammatolerans (strain DSM 15229 / JCM 11827 / EJ3).